We begin with the raw amino-acid sequence, 917 residues long: Translation initiation factor IF-2 (917 aa).

Disordered stretches follow at residues 1-84 (MSDG…GRAG) and 150-318 (KESE…DRER). Over residues 10–27 (DGNNTPSQGGEQTRSSRL) the composition is skewed to polar residues. Low complexity-rich tracts occupy residues 69-84 (AAGP…GRAG), 154-177 (QQAA…AAEA), and 227-236 (SRPAAAAPAR). A compositionally biased stretch (pro residues) spans 265-274 (GAPPAPPRRP). The span at 282–305 (GGSDRRSGRIDVRAAIEGDDDKTR) shows a compositional bias: basic and acidic residues. In terms of domain architecture, tr-type G spans 416 to 586 (PRAPVVTVMG…LLQSEMLDLK (171 aa)). A G1 region spans residues 425–432 (GHVDHGKT). 425-432 (GHVDHGKT) is a GTP binding site. Residues 450 to 454 (GITQH) are G2. A G3 region spans residues 472–475 (DTPG). Residues 472–476 (DTPGH) and 526–529 (NKID) contribute to the GTP site. The tract at residues 526–529 (NKID) is G4. Residues 562–564 (SAL) are G5.

This sequence belongs to the TRAFAC class translation factor GTPase superfamily. Classic translation factor GTPase family. IF-2 subfamily.

It is found in the cytoplasm. Functionally, one of the essential components for the initiation of protein synthesis. Protects formylmethionyl-tRNA from spontaneous hydrolysis and promotes its binding to the 30S ribosomal subunits. Also involved in the hydrolysis of GTP during the formation of the 70S ribosomal complex. This is Translation initiation factor IF-2 from Gluconobacter oxydans (strain 621H) (Gluconobacter suboxydans).